A 350-amino-acid chain; its full sequence is MMKVRPVERRDLADIFELAGKTGVGMTSLPQNEQHLAARIERALNTWQGSLDPGEQGYLFVLEDSEQQKVVGVSAIEVAVGLNDPWYNFRVGTLVHASKALNVYKSVPTLFLSNDHTGYSELCTLFLDPDYRKDKNGPFLSKVRFLFIAAFRQYFSRKVIAEMRGYTDEQGRSPFWESVGRHFFSIEFAKADYLSGTGQKAFIAELMPKHPLYVDFLAEEARAVIGQVHPHTTPARAVLETEGLQYQGYVDIFDGGPTLEANTDDVRAVRDSSKRTVVIKDYDIEDYDIDPNGRLYLVANDHYHHFRAILMNTHLSDERLRLTPESAEALGVAAGDSVRIVSLFAPETKR.

Leu125 serves as a coordination point for succinyl-CoA. The Proton donor role is filled by His229.

Belongs to the arginine N-succinyltransferase family.

The enzyme catalyses succinyl-CoA + L-arginine = N(2)-succinyl-L-arginine + CoA + H(+). Its pathway is amino-acid degradation; L-arginine degradation via AST pathway; L-glutamate and succinate from L-arginine: step 1/5. Its function is as follows. Catalyzes the transfer of succinyl-CoA to arginine to produce N(2)-succinylarginine. This Yersinia pseudotuberculosis serotype O:3 (strain YPIII) protein is Arginine N-succinyltransferase.